The following is a 745-amino-acid chain: MNILINKRIFLLVTLVGIQLNVTAKQNSSNSNREELLPIIVNTNDDSNKLPGRSVLKQKNIEQQQADNAANLINILPGVNMAGGFRPGGQTLNINGMGDAEDVRVQLDGATKSFEKYQQGSIFIEPELLRRVTVDKGNYSPQYGNGGFAGTVKFETKAARDFLQENQKIGGFLKYGNNSNNNQKTYSTALVLQNEQKNIDLLLFGSVRNAGDYKRPDNSKILFSKNNQKTGLIKVNWQISPEHLLTLSSVYGIHKGWEPFAAKRDILPKPSSGDIMRYGADIAWKRKLVYRDQKDKNYTLKYNYLPENNPWINLSTQFSYSKTTQNDTRPEKAPPVFLGTLGNQSWITYSDLTFDINNTSTFNIKSTRHELLFGLQWLKNTRNTLMYDKSKVKKEDYNYGYFQPYYMPSGRQYTQALYLQDQITWKNIIFSTGVRYDHINNIGQKNFAPQYNDISVGQNYSQKNYNGWSYYLGLKYDVNHYLSLFTNFSRTWRAPVIDEQYETQYKQSSGPVTATSLNLEKEMINQTRVGGIITLNHLFQENDVFQFRTTYFYNRGKNEIFKTRGVNCVGNAADTNHVCPKIIGNYRNLPGYVIQGAELEAYYQSTYLFGEITYSYVKGKRDTSPRNPWGKTSTWIAEIPPRKATTALGFNIPKYNFTAGWRAEFVRRQDRSPLSGDPEAKYWSLPASRGYSLHNLFLSWSPAKIKGMNIKITVDNLFNRAYNPYLGELASGTGRNIKFSLSQKF.

Residues 1–24 (MNILINKRIFLLVTLVGIQLNVTA) form the signal peptide. Residues 45 to 157 (DDSNKLPGRS…FAGTVKFETK (113 aa)) form the TBDR plug domain. One can recognise a TBDR beta-barrel domain in the interval 168–745 (KIGGFLKYGN…NIKFSLSQKF (578 aa)).

This sequence belongs to the TonB-dependent receptor family.

The protein resides in the cell outer membrane. Functionally, heme receptor. This chain is TonB-dependent heme receptor A (tdhA), found in Haemophilus influenzae (strain 86-028NP).